We begin with the raw amino-acid sequence, 759 residues long: Secretin XpsD (759 aa).

Residues 1–21 (MSERMTPRLFPVSLLIGLLAG) form the signal peptide. A lipid anchor (N-palmitoyl cysteine) is attached at Cys22. Cys22 carries the S-diacylglycerol cysteine lipid modification. A compositionally biased stretch (low complexity) spans 40 to 51 (VGAAGATQTTAE). A disordered region spans residues 40–69 (VGAAGATQTTAEQRADGNASAKPTPVIRRG). Positions 92-187 (GSATFNFEGE…APSTASPSAA (96 aa)) are N0. Residues 189-253 (GFEVRVVPLK…VQIFDVDWLS (65 aa)) are N1. The interval 254–323 (GMSVGVFPIQ…IQQWLDRIDS (70 aa)) is N2. The tract at residues 326-474 (GGVRLFSYEL…SIRDVIEKLD (149 aa)) is N3. Residues 352 to 434 (GGRGNGGNSG…PPSTNQNGSV (83 aa)) form a disordered region. Positions 392-401 (ATGGDIGGTS) are enriched in gly residues. Residues 425-434 (PPSTNQNGSV) are compositionally biased toward polar residues. The tract at residues 479–734 (QVHIEAQIAE…VLITPSIVRN (256 aa)) is secretin. The tract at residues 736 to 759 (QDARDLTDEYGSKFKSMRPMDVHK) is s domain.

This sequence belongs to the bacterial secretin family. GSP D subfamily. Forms a cylindrical channel with 15 subunits. Binds to XpsN.

The protein resides in the cell outer membrane. Functionally, involved in a type II secretion system (T2SS, formerly general secretion pathway, GSP) for the export of proteins. This subunit forms the outer membrane channel. This Xanthomonas campestris pv. campestris (strain ATCC 33913 / DSM 3586 / NCPPB 528 / LMG 568 / P 25) protein is Secretin XpsD (xpsD).